A 266-amino-acid chain; its full sequence is Undecaprenyl-diphosphatase (266 aa).

8 consecutive transmembrane segments (helical) span residues 1–21, 43–63, 81–101, 109–129, 159–179, 183–203, 219–239, and 246–266; these read MVVILAIVEGITEFLPISSTG, FLIIIQLGAIFSVVVYFWKDI, LKIIVGVLPAMVIGLLLDDII, VLIVAITLIAYGVIFIGIEVV, LAMIPGTSRSGATIIGALLLG, PLAAEFSFYLAIPTMFGATAL, YLALGSAIAFVVAYIVIKWFM, and SFASFGLYRIILGIIVIVLLY.

The protein belongs to the UppP family.

The protein resides in the cell inner membrane. It catalyses the reaction di-trans,octa-cis-undecaprenyl diphosphate + H2O = di-trans,octa-cis-undecaprenyl phosphate + phosphate + H(+). Catalyzes the dephosphorylation of undecaprenyl diphosphate (UPP). Confers resistance to bacitracin. This is Undecaprenyl-diphosphatase from Fusobacterium nucleatum subsp. nucleatum (strain ATCC 25586 / DSM 15643 / BCRC 10681 / CIP 101130 / JCM 8532 / KCTC 2640 / LMG 13131 / VPI 4355).